The sequence spans 628 residues: Glutamyl-tRNA(Gln) amidotransferase subunit E (628 aa).

Belongs to the GatB/GatE family. GatE subfamily. As to quaternary structure, heterodimer of GatD and GatE.

It carries out the reaction L-glutamyl-tRNA(Gln) + L-glutamine + ATP + H2O = L-glutaminyl-tRNA(Gln) + L-glutamate + ADP + phosphate + H(+). In terms of biological role, allows the formation of correctly charged Gln-tRNA(Gln) through the transamidation of misacylated Glu-tRNA(Gln) in organisms which lack glutaminyl-tRNA synthetase. The reaction takes place in the presence of glutamine and ATP through an activated gamma-phospho-Glu-tRNA(Gln). The GatDE system is specific for glutamate and does not act on aspartate. The chain is Glutamyl-tRNA(Gln) amidotransferase subunit E from Sulfurisphaera tokodaii (strain DSM 16993 / JCM 10545 / NBRC 100140 / 7) (Sulfolobus tokodaii).